A 650-amino-acid chain; its full sequence is Phosphatidylinositol 4-kinase gamma 7 (650 aa).

The Ubiquitin-like; degenerate domain maps to 46 to 103; that stretch reads RRVFVQTETGCVLGMELDRSDNVHTVKRRLQIALNFPTEESSLTYGDMVLTNDLSAVR. Positions 166 to 463 constitute a PI3K/PI4K catalytic domain; that stretch reads GVEPLPVHSG…SVTERDVFSP (298 aa). Residues 172–178 form a G-loop region; it reads VHSGLGG. ATP is bound by residues 173–179, lysine 194, and 283–286; these read HSGLGGA and QKFV. The interval 316-324 is catalytic loop; the sequence is FNTDRHGGN. The interval 343-369 is activation loop; that stretch reads PIDHGLCLPETLEDPYFEWIHWPQASL. Aspartate 345 lines the ATP pocket. 2 disordered regions span residues 508 to 534 and 560 to 595; these read SLGK…ENTV and STSM…KSAN. A compositionally biased stretch (acidic residues) spans 516–529; it reads IKEEEEDEEEEEDK. Composition is skewed to polar residues over residues 560–569 and 585–595; these read STSMKNTHLS and ENTSSGHKSAN. A Phosphoserine modification is found at serine 593.

It belongs to the PI3/PI4-kinase family. Type II PI4K subfamily.

The enzyme catalyses a 1,2-diacyl-sn-glycero-3-phospho-(1D-myo-inositol) + ATP = a 1,2-diacyl-sn-glycero-3-phospho-(1D-myo-inositol 4-phosphate) + ADP + H(+). In terms of biological role, the phosphorylation of phosphatidylinositol (PI) to PI4P is the first committed step in the generation of phosphatidylinositol 4,5-bisphosphate (PIP2), a precursor of the second messenger inositol 1,4,5-trisphosphate (InsP3). Undergoes autophosphorylation and phosphorylates serine/threonine residues of protein substrates. The polypeptide is Phosphatidylinositol 4-kinase gamma 7 (Arabidopsis thaliana (Mouse-ear cress)).